Here is a 389-residue protein sequence, read N- to C-terminus: S-adenosylmethionine synthase (389 aa).

Histidine 15 is an ATP binding site. A Mg(2+)-binding site is contributed by aspartate 17. Glutamate 43 contributes to the K(+) binding site. Positions 56 and 99 each coordinate L-methionine. Positions 99–109 (QSPDIAQGVNE) are flexible loop. Residues 166 to 168 (DAK), 234 to 235 (RF), aspartate 243, 249 to 250 (RK), alanine 266, and lysine 270 each bind ATP. L-methionine is bound at residue aspartate 243. Lysine 274 lines the L-methionine pocket.

This sequence belongs to the AdoMet synthase family. As to quaternary structure, homotetramer; dimer of dimers. It depends on Mg(2+) as a cofactor. K(+) serves as cofactor.

It localises to the cytoplasm. The catalysed reaction is L-methionine + ATP + H2O = S-adenosyl-L-methionine + phosphate + diphosphate. It functions in the pathway amino-acid biosynthesis; S-adenosyl-L-methionine biosynthesis; S-adenosyl-L-methionine from L-methionine: step 1/1. Catalyzes the formation of S-adenosylmethionine (AdoMet) from methionine and ATP. The overall synthetic reaction is composed of two sequential steps, AdoMet formation and the subsequent tripolyphosphate hydrolysis which occurs prior to release of AdoMet from the enzyme. The sequence is that of S-adenosylmethionine synthase from Neisseria gonorrhoeae (strain NCCP11945).